The sequence spans 285 residues: Acetylglutamate kinase (285 aa).

Substrate-binding positions include G64–G65, R86, and N180.

The protein belongs to the acetylglutamate kinase family. ArgB subfamily.

The protein resides in the plastid. It is found in the chloroplast. It carries out the reaction N-acetyl-L-glutamate + ATP = N-acetyl-L-glutamyl 5-phosphate + ADP. Its pathway is amino-acid biosynthesis; L-arginine biosynthesis; N(2)-acetyl-L-ornithine from L-glutamate: step 2/4. In terms of biological role, catalyzes the ATP-dependent phosphorylation of N-acetyl-L-glutamate. In Gracilaria tenuistipitata var. liui (Red alga), this protein is Acetylglutamate kinase.